The primary structure comprises 943 residues: Centromere protein C (943 aa).

A Glycyl lysine isopeptide (Lys-Gly) (interchain with G-Cter in SUMO2) cross-link involves residue lysine 45. The interval 70 to 91 (CIQSPSKECQKSHPKSVPVSSK) is disordered. Residues serine 73 and serine 96 each carry the phosphoserine modification. Residue lysine 119 forms a Glycyl lysine isopeptide (Lys-Gly) (interchain with G-Cter in SUMO2) linkage. A Phosphothreonine modification is found at threonine 130. A Glycyl lysine isopeptide (Lys-Gly) (interchain with G-Cter in SUMO2) cross-link involves residue lysine 134. At serine 146 the chain carries Phosphoserine. Lysine 180 is covalently cross-linked (Glycyl lysine isopeptide (Lys-Gly) (interchain with G-Cter in SUMO2)). Threonine 183 carries the phosphothreonine modification. Serine 189 is modified (phosphoserine). Glycyl lysine isopeptide (Lys-Gly) (interchain with G-Cter in SUMO2) cross-links involve residues lysine 212 and lysine 217. Over residues 224–239 (VSDEEDKTSEGQERKP) the composition is skewed to basic and acidic residues. Residues 224–250 (VSDEEDKTSEGQERKPSGSSQNRIRDS) are disordered. A Phosphoserine modification is found at serine 225. Residues lysine 238 and lysine 260 each participate in a glycyl lysine isopeptide (Lys-Gly) (interchain with G-Cter in SUMO2) cross-link. The short motif at 259–273 (KKSFSTLFLETVKRK) is the Nuclear localization signal element. A Phosphoserine modification is found at serine 261. Glycyl lysine isopeptide (Lys-Gly) (interchain with G-Cter in SUMO2) cross-links involve residues lysine 271, lysine 273, and lysine 297. 4 positions are modified to phosphoserine: serine 316, serine 333, serine 376, and serine 397. Residues 358 to 377 (LANDKHSHKPHPVETSQPSD) are disordered. The disordered stretch occupies residues 403–513 (YSKNAEKPSR…SKNKLVPEEV (111 aa)). Over residues 412-426 (RSKRTIKQKQRRKFM) the composition is skewed to basic residues. Basic and acidic residues-rich tracts occupy residues 438-463 (QSKD…RNME) and 488-510 (TRKD…KLVP). Serine 439 carries the phosphoserine modification. Lysine 440 is covalently cross-linked (Glycyl lysine isopeptide (Lys-Gly) (interchain with G-Cter in SUMO2)). Positions 484-499 (KKSSTRKDKEESKKKR) match the Nuclear localization signal motif. Serine 528 carries the post-translational modification Phosphoserine. A Glycyl lysine isopeptide (Lys-Gly) (interchain with G-Cter in SUMO2) cross-link involves residue lysine 534. Disordered regions lie at residues 537-587 (ESPV…ATKG) and 632-717 (DCSR…KQSK). At serine 538 the chain carries Phosphoserine. The Nuclear localization signal motif lies at 558–574 (RKSTKKTNQSSKNIRKK). Basic residues predominate over residues 570-583 (NIRKKTIPLKRQKT). Polar residues predominate over residues 633-672 (CSRSTRSSKNEDNIMTAQNVPLKPQTSGYTCNIPTESNLD). Residue lysine 677 forms a Glycyl lysine isopeptide (Lys-Gly) (interchain with G-Cter in SUMO2) linkage. Phosphoserine is present on residues serine 684, serine 709, and serine 710. Residues 706–715 (VHGSSDDSKQ) are compositionally biased toward basic and acidic residues. Lysine 727 is covalently cross-linked (Glycyl lysine isopeptide (Lys-Gly) (interchain with G-Cter in SUMO2)). Threonine 734 carries the phosphothreonine modification. The interval 737–759 (VRRTKRTRLKPLEYWRGERIDYQ) is MIF2 homology domain II. Serine 763 and serine 773 each carry phosphoserine. Residues 780–798 (KRKAKENIGKVNKKSNKKR) carry the Nuclear localization signal motif. A Glycyl lysine isopeptide (Lys-Gly) (interchain with G-Cter in SUMO2) cross-link involves residue lysine 807. The MIF2 homology domain III stretch occupies residues 890–943 (LVFYVNFGDLLCTLHETPYILSTGDSFYVPSGNYYNIKNLRNEESVLLFTQIKR).

This sequence belongs to the CENP-C/MIF2 family. Oligomer. Component of the CENPA-NAC complex, at least composed of CENPA, CENPC, CENPH, CENPM, CENPN, CENPT and CENPU. The CENPA-NAC complex interacts with the CENPA-CAD complex, composed of CENPI, CENPK, CENPL, CENPO, CENPP, CENPQ, CENPR and CENPS. Binds to DAXX. Interacts with DNMT3B. Interacts directly with CENPA. Identified in a centromere complex containing histones H2A, H2B and H4, and at least CENPA, CENPB, CENPC, CENPT, CENPN, HJURP, SUPT16H, SSRP1 and RSF1. Interacts with MEIKIN.

The protein localises to the nucleus. It localises to the chromosome. The protein resides in the centromere. It is found in the kinetochore. In terms of biological role, component of the CENPA-NAC (nucleosome-associated) complex, a complex that plays a central role in assembly of kinetochore proteins, mitotic progression and chromosome segregation. The CENPA-NAC complex recruits the CENPA-CAD (nucleosome distal) complex and may be involved in incorporation of newly synthesized CENPA into centromeres. CENPC recruits DNA methylation and DNMT3B to both centromeric and pericentromeric satellite repeats and regulates the histone code in these regions. The chain is Centromere protein C (CENPC) from Homo sapiens (Human).